The primary structure comprises 215 residues: Oligoribonuclease (215 aa).

Positions 5-170 (LVWIDCEMTG…ADIHESIREL (166 aa)) constitute an Exonuclease domain. Tyr-127 is an active-site residue. The segment at 196 to 215 (LSDGAGAQEETDSAEAPQSG) is disordered.

This sequence belongs to the oligoribonuclease family.

It localises to the cytoplasm. Functionally, 3'-to-5' exoribonuclease specific for small oligoribonucleotides. This Mycobacterium bovis (strain BCG / Pasteur 1173P2) protein is Oligoribonuclease.